A 354-amino-acid chain; its full sequence is Nicotinate-nucleotide--dimethylbenzimidazole phosphoribosyltransferase (354 aa).

The Proton acceptor role is filled by E322.

Belongs to the CobT family.

The catalysed reaction is 5,6-dimethylbenzimidazole + nicotinate beta-D-ribonucleotide = alpha-ribazole 5'-phosphate + nicotinate + H(+). The protein operates within nucleoside biosynthesis; alpha-ribazole biosynthesis; alpha-ribazole from 5,6-dimethylbenzimidazole: step 1/2. Its function is as follows. Catalyzes the synthesis of alpha-ribazole-5'-phosphate from nicotinate mononucleotide (NAMN) and 5,6-dimethylbenzimidazole (DMB). This is Nicotinate-nucleotide--dimethylbenzimidazole phosphoribosyltransferase from Solidesulfovibrio magneticus (strain ATCC 700980 / DSM 13731 / RS-1) (Desulfovibrio magneticus).